A 161-amino-acid polypeptide reads, in one-letter code: Nucleotide-binding protein Mmwyl1_2033 (161 aa).

This sequence belongs to the YajQ family.

In terms of biological role, nucleotide-binding protein. In Marinomonas sp. (strain MWYL1), this protein is Nucleotide-binding protein Mmwyl1_2033.